The following is a 125-amino-acid chain: Alpha-endosulfine (125 aa).

Residues 1–37 (MSDKYIGDSHLEETGEEKQDSQEKEAVTPEKAEEQKL) show a composition bias toward basic and acidic residues. The disordered stretch occupies residues 1 to 52 (MSDKYIGDSHLEETGEEKQDSQEKEAVTPEKAEEQKLKAKYPNLGQKPGGSD). T28 carries the phosphothreonine; by CDK2 modification. A Phosphoserine; by GWL modification is found at S67. A disordered region spans residues 86-107 (GPDKNLVTGDHIPTPQDLPQRK). T99 carries the post-translational modification Phosphothreonine; by CDK2. A Phosphoserine; by PKA modification is found at S109.

Belongs to the endosulfine family. In terms of assembly, interacts (when phosphorylated at Ser-67) with ppp2r2d. Post-translationally, phosphorylation at Ser-67 by gwl during mitosis is essential for interaction with PPP2R2D (PR55-delta) and subsequent inactivation of PP2A. Phosphorylated by PKA.

It is found in the cytoplasm. Its function is as follows. Protein phosphatase inhibitor that specifically inhibits protein phosphatase 2A (PP2A) during mitosis. When phosphorylated at Ser-67 during mitosis, specifically interacts with ppp2r2d (PR55-delta) and inhibits its activity, leading to inactivation of PP2A, an essential condition to keep cyclin-B1-CDK1 activity high during M phase. This chain is Alpha-endosulfine (ensa), found in Xenopus laevis (African clawed frog).